We begin with the raw amino-acid sequence, 1025 residues long: Retrovirus-related Pol polyprotein from type-1 retrotransposable element R2 (1025 aa).

The segment covering 1 to 11 (NQIKKSNTSTG) has biased composition (polar residues). The tract at residues 1–38 (NQIKKSNTSTGARIPKAMTNPADNFAGGQWKPPGRRSA) is disordered. The segment at 46–69 (FVCEHCLRAFTTNTGRGLHIKRAH) adopts a C2H2-type zinc-finger fold. Residues 146–158 (NRARETELTRLET) are compositionally biased toward basic and acidic residues. A disordered region spans residues 146-172 (NRARETELTRLETADEDPASQEQDNPN). Residues 358–635 (MIMYHGQCPR…DQWKYLGVVY (278 aa)) form the Reverse transcriptase domain. The interval 755-1025 (SLLGGDWVAE…YRTERRRTAN (271 aa)) is nucleic acid-binding endonuclease.

The enzyme catalyses DNA(n) + a 2'-deoxyribonucleoside 5'-triphosphate = DNA(n+1) + diphosphate. The polypeptide is Retrovirus-related Pol polyprotein from type-1 retrotransposable element R2 (Nasonia vitripennis (Parasitic wasp)).